The sequence spans 263 residues: Hemin import ATP-binding protein HmuV (263 aa).

One can recognise an ABC transporter domain in the interval isoleucine 2 to arginine 242. An ATP-binding site is contributed by glycine 34 to threonine 41.

The protein belongs to the ABC transporter superfamily. Heme (hemin) importer (TC 3.A.1.14.5) family. The complex is composed of two ATP-binding proteins (HmuV), two transmembrane proteins (HmuU) and a solute-binding protein (HmuT).

The protein localises to the cell inner membrane. Functionally, part of the ABC transporter complex HmuTUV involved in hemin import. Responsible for energy coupling to the transport system. This is Hemin import ATP-binding protein HmuV from Mesorhizobium japonicum (strain LMG 29417 / CECT 9101 / MAFF 303099) (Mesorhizobium loti (strain MAFF 303099)).